The primary structure comprises 200 residues: 3-isopropylmalate dehydratase small subunit (200 aa).

It belongs to the LeuD family. LeuD type 1 subfamily. In terms of assembly, heterodimer of LeuC and LeuD.

The catalysed reaction is (2R,3S)-3-isopropylmalate = (2S)-2-isopropylmalate. It participates in amino-acid biosynthesis; L-leucine biosynthesis; L-leucine from 3-methyl-2-oxobutanoate: step 2/4. Functionally, catalyzes the isomerization between 2-isopropylmalate and 3-isopropylmalate, via the formation of 2-isopropylmaleate. The chain is 3-isopropylmalate dehydratase small subunit from Vibrio cholerae serotype O1 (strain ATCC 39541 / Classical Ogawa 395 / O395).